We begin with the raw amino-acid sequence, 179 residues long: Cell division protein ZapC (179 aa).

Belongs to the ZapC family. In terms of assembly, interacts directly with FtsZ.

Its subcellular location is the cytoplasm. Functionally, contributes to the efficiency of the cell division process by stabilizing the polymeric form of the cell division protein FtsZ. Acts by promoting interactions between FtsZ protofilaments and suppressing the GTPase activity of FtsZ. This Photobacterium profundum (strain SS9) protein is Cell division protein ZapC.